The primary structure comprises 266 residues: Movement protein (266 aa).

The tract at residues 211-244 is disordered; it reads SKTGKKFSSKSENNSGNNRPKPDKNQRKEKGLKV. Over residues 230 to 244 the composition is skewed to basic and acidic residues; that stretch reads PKPDKNQRKEKGLKV.

The protein belongs to the tobamovirus movement protein family. In terms of assembly, binds to host RBCS at the plasmodesmata; this interaction seems required for viral systemic movement.

It is found in the host cytoplasm. Its subcellular location is the host cytoskeleton. The protein resides in the host cell junction. The protein localises to the host plasmodesma. Its function is as follows. Transports viral genome to neighboring plant cells directly through plasmosdesmata, without any budding. The movement protein allows efficient cell to cell propagation, by bypassing the host cell wall barrier. Forms a ribonucleoprotein complex with viral RNA. Binds microtubules and modulates microtubule stability. Can bind double-stranded DNA. Evades host resistance (R) protein (e.g. tomato ToMV resistance protein TM-2(2), AC Q71BG9) in ToMV/TMV resistant plants. The polypeptide is Movement protein (MP) (Tomato brown rugose fruit virus (isolate TOBRFV/Tomato/Jordan/Tom1-Jo/2015) (ToBRFV)).